Here is a 288-residue protein sequence, read N- to C-terminus: UTP--glucose-1-phosphate uridylyltransferase (288 aa).

This sequence belongs to the UDPGP type 2 family.

It carries out the reaction alpha-D-glucose 1-phosphate + UTP + H(+) = UDP-alpha-D-glucose + diphosphate. The protein operates within glycolipid metabolism; diglucosyl-diacylglycerol biosynthesis. Catalyzes the formation of UDP-glucose from glucose-1-phosphate and UTP. This is an intermediate step in the biosynthesis of diglucosyl-diacylglycerol (Glc2-DAG), i.e. the predominant glycolipid found in the S.aureus membrane, which is also used as a membrane anchor for lipoteichoic acid (LTA). This Staphylococcus aureus (strain MRSA252) protein is UTP--glucose-1-phosphate uridylyltransferase (gtaB).